We begin with the raw amino-acid sequence, 577 residues long: MRSHFCTEISEKDVGKTIKVAGWCNTYRDHGGVVFIDLRDKSGLVQLVCDPSSKAYEKALEVRSEFVLVAKGRVRLRGAGLENPKLKTGKIEIVLEELVIENKSATPPIEIGNKSVNEDLRLKYRYLDLRSLNAYEIFKLRSEVALITRNTLAQKGFLEIETPILSKTTPEGARDYLVPSRVHEGEFFALPQSPQLFKQLLMVGGMDRYFQIARCFRDEDLRADRQPEFTQIDAEMSFCDENDVMGVVEDLLQEIFKAIGHTISKPFKRMPYKEAMENYGSDKPDLRFELPLIEVGDCFIDSSNAIFSNIAKDPKNQRIKALNVKGADALFSRSVLKELEEFVRQFGAKGLAYLQIKEDGIKGPLVKFLSEKGLKNILEKTGAKIGDIVFFGAGDKKIVLDYMGRLRLKVAETLDLIDKDALNFLWVVNFPMFEKTENGYHAAHHPFTMPKNIECEDIEEVEAHAYDVVLNGVELGGGSIRIHKEEMQKKVFEKINIHEEEAQKKFGFLLEALKFGAPPHGGFAIGFDRLIMLMTKSNSIRDVIAFPKTQKASCLLTNAPSPINEEQLRELHIRLRK.

Residue Glu171 coordinates L-aspartate. The interval 195–198 (QLFK) is aspartate. Residue Arg217 coordinates L-aspartate. ATP is bound by residues 217–219 (RDE) and Gln226. His444 is an L-aspartate binding site. Position 474 (Glu474) interacts with ATP. Arg481 is an L-aspartate binding site. 526 to 529 (GFDR) provides a ligand contact to ATP.

Belongs to the class-II aminoacyl-tRNA synthetase family. Type 1 subfamily. Homodimer.

The protein localises to the cytoplasm. The enzyme catalyses tRNA(Asx) + L-aspartate + ATP = L-aspartyl-tRNA(Asx) + AMP + diphosphate. In terms of biological role, aspartyl-tRNA synthetase with relaxed tRNA specificity since it is able to aspartylate not only its cognate tRNA(Asp) but also tRNA(Asn). Reaction proceeds in two steps: L-aspartate is first activated by ATP to form Asp-AMP and then transferred to the acceptor end of tRNA(Asp/Asn). This Helicobacter pylori (strain P12) protein is Aspartate--tRNA(Asp/Asn) ligase.